The sequence spans 99 residues: Small ribosomal subunit protein uS14m (99 aa).

Belongs to the universal ribosomal protein uS14 family.

The protein localises to the mitochondrion. The chain is Small ribosomal subunit protein uS14m (RPS14) from Prototheca wickerhamii.